The primary structure comprises 699 residues: Receptor-type tyrosine-protein phosphatase epsilon (699 aa).

A signal peptide spans 1–22 (MEPFCPLLLASFSLSLATAGQG). The segment covering 20–36 (GQGNDTTPTESNWTSTT) has biased composition (low complexity). The segment at 20–41 (GQGNDTTPTESNWTSTTAGPPD) is disordered. N-linked (GlcNAc...) asparagine glycosylation is found at Asn23 and Asn31. Over 23 to 47 (NDTTPTESNWTSTTAGPPDPGTSQP) the chain is Extracellular. Residues 48–68 (LLTWLLLPLLLLLFLLAAYFF) form a helical membrane-spanning segment. The Cytoplasmic segment spans residues 69–699 (RFRKQRKAVV…DIFSDYANFK (631 aa)). Tyrosine-protein phosphatase domains lie at 134–393 (FREE…LLEY) and 425–688 (LEEE…VQDF). Substrate contacts are provided by residues Asp302, 334–340 (CSAGVGR), and Gln378. The active-site Phosphocysteine intermediate is the Cys334. Residue Cys629 is the Phosphocysteine intermediate of the active site. Tyr695 carries the post-translational modification Phosphotyrosine.

This sequence belongs to the protein-tyrosine phosphatase family. Receptor class 4 subfamily. Monomer. Isoform 2: Homodimer. Can form oligomers. Dimerization is increased by oxidative stress and decreased by EGFR. Isoform 2 interacts with GRB2. Post-translationally, a catalytically active cytoplasmic form (p65) is produced by proteolytic cleavage of either isoform 1, isoform 2 or isoform 3. Isoform 1 and isoform 2 are phosphorylated on tyrosine residues by tyrosine kinase Neu. In terms of processing, N-glycosylated. Isoform 1 is highly expressed in the brain, lung, spleen and testis. Isoform 2 is highly expressed in thymus, spleen and lung. Isoform 1 and isoform 2 are expressed in primary hepatocytes.

The protein resides in the cell membrane. It localises to the cytoplasm. It catalyses the reaction O-phospho-L-tyrosyl-[protein] + H2O = L-tyrosyl-[protein] + phosphate. In terms of biological role, isoform 1 plays a critical role in signaling transduction pathways and phosphoprotein network topology in red blood cells. May play a role in osteoclast formation and function. Acts as a negative regulator of insulin receptor (IR) signaling and is involved in insulin-induced glucose metabolism mainly through direct dephosphorylation and inactivation of IR in hepatocytes and liver. Functionally, isoform 2 acts as a negative regulator of insulin receptor (IR) signaling in skeletal muscle. Regulates insulin-induced tyrosine phosphorylation of insulin receptor (IR) and insulin receptor substrate 1 (IRS-1), phosphorylation of protein kinase B and glycogen synthase kinase-3 and insulin induced stimulation of glucose uptake. Isoform 1 and isoform 2 act as a negative regulator of FceRI-mediated signal transduction leading to cytokine production and degranulation, most likely by acting at the level of SYK to affect downstream events such as phosphorylation of SLP76 and LAT and mobilization of Ca(2+). In Rattus norvegicus (Rat), this protein is Receptor-type tyrosine-protein phosphatase epsilon (Ptpre).